The chain runs to 255 residues: Na(+)-translocating NADH-quinone reductase subunit C (255 aa).

The helical transmembrane segment at Leu-12–Gly-32 threads the bilayer. Position 223 is an FMN phosphoryl threonine (Thr-223).

This sequence belongs to the NqrC family. In terms of assembly, composed of six subunits; NqrA, NqrB, NqrC, NqrD, NqrE and NqrF. The cofactor is FMN.

The protein localises to the cell inner membrane. It catalyses the reaction a ubiquinone + n Na(+)(in) + NADH + H(+) = a ubiquinol + n Na(+)(out) + NAD(+). Its function is as follows. NQR complex catalyzes the reduction of ubiquinone-1 to ubiquinol by two successive reactions, coupled with the transport of Na(+) ions from the cytoplasm to the periplasm. NqrA to NqrE are probably involved in the second step, the conversion of ubisemiquinone to ubiquinol. The sequence is that of Na(+)-translocating NADH-quinone reductase subunit C from Vibrio anguillarum (Listonella anguillarum).